The chain runs to 728 residues: Diacylglycerol kinase 1 (728 aa).

A helical membrane pass occupies residues 27–48; the sequence is GLMFSCFVAALVGILTIAYTAF. 2 consecutive Phorbol-ester/DAG-type zinc fingers follow at residues 79-137 and 149-212; these read PHSW…PKDC and VHQW…GDIC. Disordered stretches follow at residues 265–296 and 308–336; these read KQTNETSADTGNSGSNCDESTESTADTGPTVN and VMNGDSSNGDSDSNGKLEKKPSVKRTGSF. The span at 267 to 294 shows a compositional bias: polar residues; sequence TNETSADTGNSGSNCDESTESTADTGPT. Positions 310–319 are enriched in low complexity; that stretch reads NGDSSNGDSD. Residues 357–496 enclose the DAGKc domain; sequence SDARPLLVFI…LDRWKVSILN (140 aa). Residues K491 and K500 each participate in a glycyl lysine isopeptide (Lys-Gly) (interchain with G-Cter in ubiquitin) cross-link.

It belongs to the eukaryotic diacylglycerol kinase family. In terms of assembly, monomer. Expressed in roots, shoots, and leaves.

The protein localises to the membrane. The catalysed reaction is a 1,2-diacyl-sn-glycerol + ATP = a 1,2-diacyl-sn-glycero-3-phosphate + ADP + H(+). Its function is as follows. Phosphorylates the second messenger diacylglycerol (DAG) to generate phosphatidic acid (PA), another important signaling molecule. PA is required for plant development and responses to abiotic stress and pathogen attack. May be involved in the accumulation of PA during cold stress. The polypeptide is Diacylglycerol kinase 1 (DGK1) (Arabidopsis thaliana (Mouse-ear cress)).